The following is a 370-amino-acid chain: Tyrosine-protein kinase transforming protein SEA (370 aa).

The 264-residue stretch at 60–323 (THRSRVIGRG…GLVCELERVL (264 aa)) folds into the Protein kinase domain. Residues 66-74 (IGRGHFGSV) and Lys-92 contribute to the ATP site. Asp-186 acts as the Proton acceptor in catalysis. Tyr-216 is modified (phosphotyrosine; by autocatalysis). Residues 345 to 370 (PPFPPAPRGQLPDSEDEEDEEEEVAE) are disordered. Over residues 357 to 370 (DSEDEEDEEEEVAE) the composition is skewed to acidic residues.

It belongs to the protein kinase superfamily. Tyr protein kinase family.

The enzyme catalyses L-tyrosyl-[protein] + ATP = O-phospho-L-tyrosyl-[protein] + ADP + H(+). The chain is Tyrosine-protein kinase transforming protein SEA (V-SEA) from Galliformes.